The following is a 725-amino-acid chain: MLTKSKQDPHLNHILNARHHDPFSYLGLHQDGTQYILRLFQPFAARAWLQTASGWVPLQRSHEAGLFEWKGNTPPPVPCRIRLEENGHSWETYDAYTFWTTLSPEELYLFGEGRLKQAYRTFGAHLCEQQGVAGVRFVVWAPNAERVSVIGNFNHWDGRMHQMRVHGSSGVWEIFIPGLTSSDLYKFEIRNRQTGQILVKTDPYGFSFEQRPGTAARVTAHGHYAWQDAEWLEDRARADWLHAPFNCYEVHLGSWRRDAHGEFLGYRELAHQLVPYMQEMGYTHIELLPVSEHPLNESWGYQTTGYFAPTNRFGSPDDLRYFVDQCHQAGIGVILDWVPGHFPKDDWALARFDGSALFEHEDPRLGEHQDWGTYIFNYGRNEVRNFLLASAHYWLEEFHMDGLRVDAVASMLYLDYSRKEGEWLPNRHGGRENLEAIDFLKQLNVMVHEDFPGALTIAEESTSWPMVSRPVYLGGLGFSMKWNMGWMNDTLSYMQHDPIHRRFHHDKLTFGQIYAYSENFVLPFSHDEVVHGKRSLLDKMPGDTWQKFANLRLLATYQMTASGKKLNFMGNELAQGREWNVNSSLDWHLLDLHWHQGIQRLHRDLSHLYRQVPALHELDFDAHGFEWIDCSDSDQSIINYLRRARDGSFVLVLLNFTPVLRSGYRVGTPLAGHYREIFNSDAGYYGGSNQGNGNGLQTEAYPWMGHSHSLVVTIPPLGGVIIQPG.

The active-site Nucleophile is aspartate 406. Glutamate 459 (proton donor) is an active-site residue.

Belongs to the glycosyl hydrolase 13 family. GlgB subfamily. As to quaternary structure, monomer.

It catalyses the reaction Transfers a segment of a (1-&gt;4)-alpha-D-glucan chain to a primary hydroxy group in a similar glucan chain.. It participates in glycan biosynthesis; glycogen biosynthesis. In terms of biological role, catalyzes the formation of the alpha-1,6-glucosidic linkages in glycogen by scission of a 1,4-alpha-linked oligosaccharide from growing alpha-1,4-glucan chains and the subsequent attachment of the oligosaccharide to the alpha-1,6 position. This chain is 1,4-alpha-glucan branching enzyme GlgB, found in Methylobacillus flagellatus (strain ATCC 51484 / DSM 6875 / VKM B-1610 / KT).